A 331-amino-acid polypeptide reads, in one-letter code: MAEGGGPEPGEQERRSSGPRPPSARDLQLALAELYEDEVKCKSSKSNRPKATVFKSPRTPPQRFYSSEHEYSGLNIVRPSTGKIVNELFKEAREHGAVPLNEATRASGDDKSKSFTGGGYRLGSSFCKRSEYIYGENQLQDVQILLKLWSNGFSLDDGELRPYNEPTNAQFLESVKRGEIPLELQRLVHGGQVNLDMEDHQDQEYIKPRLRFKAFSGEGQKLGSLTPEIVSTPSSPEEEDKSILNAVVLIDDSVPTTKIQIRLADGSRLIQRFNSTHRILDVRNFIVQSRPEFAALDFILVTSFPNKELTDESLTLLEADILNTVLLQQLK.

Disordered regions lie at residues 1–26 (MAEG…SARD) and 40–65 (KCKS…QRFY). Residue Ala2 is modified to N-acetylalanine. Ser56 is modified (phosphoserine). Thr59 carries the post-translational modification Phosphothreonine. A Phosphoserine modification is found at Ser66. Residues 141-206 (DVQILLKLWS…MEDHQDQEYI (66 aa)) form the SEP domain. Residues Ser231, Ser234, and Ser235 each carry the phosphoserine modification. The region spanning 252–329 (DSVPTTKIQI…DILNTVLLQQ (78 aa)) is the UBX domain.

This sequence belongs to the NSFL1C family. Interacts with VCP. Does not bind ubiquitin.

It localises to the nucleus. Its subcellular location is the cytoplasm. The protein resides in the cytosol. The protein localises to the endoplasmic reticulum. It is found in the golgi apparatus. It localises to the cytoskeleton. Its subcellular location is the microtubule organizing center. The protein resides in the centrosome. Its function is as follows. Adapter protein required for Golgi and endoplasmic reticulum biogenesis. Involved in Golgi and endoplasmic reticulum maintenance during interphase and in their reassembly at the end of mitosis. The complex formed with VCP has membrane fusion activity; membrane fusion activity requires USO1-GOLGA2 tethering and BET1L. VCPIP1 is also required, but not its deubiquitinating activity. Together with NSFL1C/p47, regulates the centrosomal levels of kinase AURKA/Aurora A during mitotic progression by promoting AURKA removal from centrosomes in prophase. Also, regulates spindle orientation during mitosis. The sequence is that of UBX domain-containing protein 2B (UBXN2B) from Homo sapiens (Human).